A 191-amino-acid chain; its full sequence is Elongation factor P (191 aa).

Lys-34 carries the N6-(3,6-diaminohexanoyl)-5-hydroxylysine modification.

The protein belongs to the elongation factor P family. In terms of processing, may be beta-lysylated on the epsilon-amino group of Lys-34 by the combined action of EpmA and EpmB, and then hydroxylated on the C5 position of the same residue by EpmC (if this protein is present). Lysylation is critical for the stimulatory effect of EF-P on peptide-bond formation. The lysylation moiety may extend toward the peptidyltransferase center and stabilize the terminal 3-CCA end of the tRNA. Hydroxylation of the C5 position on Lys-34 may allow additional potential stabilizing hydrogen-bond interactions with the P-tRNA.

It localises to the cytoplasm. It participates in protein biosynthesis; polypeptide chain elongation. Its function is as follows. Involved in peptide bond synthesis. Alleviates ribosome stalling that occurs when 3 or more consecutive Pro residues or the sequence PPG is present in a protein, possibly by augmenting the peptidyl transferase activity of the ribosome. Modification of Lys-34 is required for alleviation. The chain is Elongation factor P from Colwellia psychrerythraea (strain 34H / ATCC BAA-681) (Vibrio psychroerythus).